The primary structure comprises 236 residues: Purine nucleoside phosphorylase DeoD-type (236 aa).

His-5 is a binding site for a purine D-ribonucleoside. Residues Gly-21, Arg-25, Arg-44, and 88–91 (RVGS) each bind phosphate. A purine D-ribonucleoside is bound by residues 180 to 182 (DME) and 204 to 205 (SD). Residue Asp-205 is the Proton donor of the active site.

It belongs to the PNP/UDP phosphorylase family. In terms of assembly, homohexamer; trimer of homodimers.

It catalyses the reaction a purine D-ribonucleoside + phosphate = a purine nucleobase + alpha-D-ribose 1-phosphate. It carries out the reaction a purine 2'-deoxy-D-ribonucleoside + phosphate = a purine nucleobase + 2-deoxy-alpha-D-ribose 1-phosphate. Functionally, catalyzes the reversible phosphorolytic breakdown of the N-glycosidic bond in the beta-(deoxy)ribonucleoside molecules, with the formation of the corresponding free purine bases and pentose-1-phosphate. In Aliivibrio salmonicida (strain LFI1238) (Vibrio salmonicida (strain LFI1238)), this protein is Purine nucleoside phosphorylase DeoD-type.